The chain runs to 598 residues: Probable ATP-dependent RNA helicase DDX52 (598 aa).

At Lys15 the chain carries N6-acetyllysine. A Phosphoserine modification is found at Ser39. The short motif at 166-194 is the Q motif element; the sequence is QLDQEYKINSRLLQNILDAGFQVPTPIQM. The Helicase ATP-binding domain occupies 197–375; that stretch reads IPVMLHGREL…KLNLDNVVSV (179 aa). An ATP-binding site is contributed by 210-217; it reads APTGSGKT. Residues 319–322 carry the DEAD box motif; it reads DESD. Residues 386–547 form the Helicase C-terminal domain; the sequence is TVEQELLFVG…PVPEYIKGFQ (162 aa).

It belongs to the DEAD box helicase family. DDX52/ROK1 subfamily.

The protein resides in the nucleus. It is found in the nucleolus. It carries out the reaction ATP + H2O = ADP + phosphate + H(+). In terms of biological role, required for efficient ribosome biogenesis. May control cell cycle progression by regulating translation of mRNAs that contain a terminal oligo pyrimidine (TOP) motif in their 5' UTRs, such as GTPBP4. The polypeptide is Probable ATP-dependent RNA helicase DDX52 (Ddx52) (Mus musculus (Mouse)).